A 259-amino-acid chain; its full sequence is Ribonuclease T2-B (259 aa).

An N-terminal signal peptide occupies residues 1-29 (MAPAEARGALPGWISVLGWGLALCSLCGA). C53 and C59 form a disulfide bridge. Residue H69 is part of the active site. Cystine bridges form between C79–C125, C188–C244, and C206–C217. N-linked (GlcNAc...) asparagine glycosylation is found at N80 and N110. Active-site residues include E118 and H122. N216 carries N-linked (GlcNAc...) asparagine glycosylation.

The protein belongs to the RNase T2 family.

The protein resides in the secreted. The protein localises to the lysosome lumen. Its subcellular location is the endoplasmic reticulum lumen. It localises to the mitochondrion intermembrane space. The enzyme catalyses a ribonucleotidyl-ribonucleotide-RNA + H2O = a 3'-end 3'-phospho-ribonucleotide-RNA + a 5'-end dephospho-ribonucleoside-RNA + H(+). It catalyses the reaction an adenylyl-uridine-RNA = a 3'-end 2',3'-cyclophospho-AMP-RNA + a 5'-end dephospho-uridine-RNA. It carries out the reaction a guanylyl-uridine-RNA = a 3'-end 2',3'-cyclophospho-GMP-RNA + a 5'-end dephospho-uridine-RNA. Inhibited by Zn(2+) and Cu(2+). Its function is as follows. Ribonuclease that plays an essential role in innate immune response by recognizing and degrading RNAs from microbial pathogens that are subsequently sensed by TLR8. Cleaves preferentially single-stranded RNA molecules between purine and uridine residues, which critically contributes to the supply of catabolic uridine and the generation of purine-2',3'-cyclophosphate-terminated oligoribonucleotides. In turn, RNase T2 degradation products promote the RNA-dependent activation of TLR8. In plasmacytoid dendritic cells, it cooperates with PLD3 or PLD4 5'-&gt;3' exonucleases to process RNA fragments and release 2',3'-cyclic guanosine monophosphate (2',3'-cGMP), a potent stimulatory ligand for TLR7. Also plays a key role in degradation of mitochondrial RNA and processing of non-coding RNA imported from the cytosol into mitochondria. Participates as well in degradation of mitochondrion-associated cytosolic rRNAs. The protein is Ribonuclease T2-B of Mus musculus (Mouse).